The following is a 216-amino-acid chain: ATP phosphoribosyltransferase (216 aa).

The protein belongs to the ATP phosphoribosyltransferase family. Short subfamily. As to quaternary structure, heteromultimer composed of HisG and HisZ subunits.

The protein resides in the cytoplasm. The enzyme catalyses 1-(5-phospho-beta-D-ribosyl)-ATP + diphosphate = 5-phospho-alpha-D-ribose 1-diphosphate + ATP. It functions in the pathway amino-acid biosynthesis; L-histidine biosynthesis; L-histidine from 5-phospho-alpha-D-ribose 1-diphosphate: step 1/9. Functionally, catalyzes the condensation of ATP and 5-phosphoribose 1-diphosphate to form N'-(5'-phosphoribosyl)-ATP (PR-ATP). Has a crucial role in the pathway because the rate of histidine biosynthesis seems to be controlled primarily by regulation of HisG enzymatic activity. The chain is ATP phosphoribosyltransferase from Chromohalobacter salexigens (strain ATCC BAA-138 / DSM 3043 / CIP 106854 / NCIMB 13768 / 1H11).